The following is a 121-amino-acid chain: uncharacterized protein (121 aa).

Disordered regions lie at residues 1–41 and 94–121; these read MRRQ…QESR and GGTISGQQSRNSSLPQAKYYSRHGGLRR. The span at 98–108 shows a compositional bias: polar residues; sequence SGQQSRNSSLP.

In terms of tissue distribution, predominantly expressed in tissues containing motile cilia. Also expressed in non-motile ciliated adult olfactory bulbs.

Its subcellular location is the cytoplasm. The protein resides in the cytoskeleton. It is found in the cilium basal body. This is an uncharacterized protein from Mus musculus (Mouse).